A 366-amino-acid chain; its full sequence is 15-cis-zeta-carotene isomerase, chloroplastic (366 aa).

Residues 1–45 constitute a chloroplast transit peptide; that stretch reads MASQLRLHLAATPPLLPHRRPHLARPLCPTLNPIRAPLPPLSRVL. 6 helical membrane-spanning segments follow: residues 94–114, 136–156, 171–191, 203–223, 260–280, and 338–358; these read SWAYFAGILGAVLVALNVLWI, EVVMLLLTIIFAVVHSGMASL, VLFAGISLPLAVTTIVYFINH, GITGIHELLWFSSFISFFFLY, VIWCLAHTLWIGNSVAVAASV, and LPYVAITMLTLGAYFAHPLMQ.

As to expression, expressed in leaves and roots, and at lower levels in embryos and endosperm.

Its subcellular location is the plastid. It is found in the chloroplast membrane. The enzyme catalyses 9,9',15-tri-cis-zeta-carotene = 9,9'-di-cis-zeta-carotene. Its function is as follows. Isomerase involved in the biosynthesis of carotenoids. Catalyzes the cis- to trans-conversion of the 15-cis-bond in 9,15,9'-tri-cis-zeta-carotene. The protein is 15-cis-zeta-carotene isomerase, chloroplastic of Zea mays (Maize).